Consider the following 715-residue polypeptide: MIYEGKAITVKALESGIVELKFDLKGESVNKFNRLTLNELRQAVDTIKADASIKGVIVSSGKDVFIVGADITEFVDNFKLPDAELVAGNLEANKIFSDFEDLNVPTVAAINGIALGGGLEMCLAADFRVMSATAKIGLPEVKLGIYPGFGGTVRLPRLIGADNAIEWIAAGKENRAEDALKVGAVDAVVAPDKLAEAALNLIKGAISGEFDYKAKRQPKLEKLKLNAIEQMMSFETAKGFVAGQAGPNYPAPVEAIKTIQKAANFGRDKALEVEAAGFVKLAKTSAAQSLIGLFLNDQELKKKAKAYDEIARDVKQAAVLGAGIMGGGIAYQSASKGTPILMKDINEHGIEQGLAEAAKLLVGRVDKGRMTAAKMAEVLNGIRPTLSYGDFGHVDLVVEAVVENPKVKQAVLAEVEAQVKDDTILASNTSTISISLLAKALKRPENFVGMHFFNPVHMMPLVEVIRGEKSSELAVATTVAYAKKMGKNPIVVNDCPGFLVNRVLFPYFGGFAKLVSAGVDFVRIDKVMEKFGWPMGPAYLMDVVGIDTGHHGRDVMAEGFPDRMKDDRRSAIDALYEAKRLGQKNGKGFYAYEADKKGKQKKVADPSVHEVLAPVIYEQREVSDEDIINWMMIALCLETVRCLEDGIVETAAEADMGLVYGIGFPPFRGGALRYIDSIGVAEFVALADKYADLGPLYHPTAKLREMAKNGQSFFG.

The segment at 1 to 190 (MIYEGKAITV…KVGAVDAVVA (190 aa)) is enoyl-CoA hydratase/isomerase. Asp297 serves as a coordination point for substrate. Residues 312 to 715 (RDVKQAAVLG…MAKNGQSFFG (404 aa)) form a 3-hydroxyacyl-CoA dehydrogenase region. NAD(+) contacts are provided by residues Met325, Asp344, 401 to 403 (VVE), Lys408, and Ser430. Catalysis depends on His451, which acts as the For 3-hydroxyacyl-CoA dehydrogenase activity. Residue Asn454 participates in NAD(+) binding. Substrate is bound by residues Asn501 and Tyr660.

This sequence in the N-terminal section; belongs to the enoyl-CoA hydratase/isomerase family. In the C-terminal section; belongs to the 3-hydroxyacyl-CoA dehydrogenase family. In terms of assembly, heterotetramer of two alpha chains (FadB) and two beta chains (FadA).

The catalysed reaction is a (3S)-3-hydroxyacyl-CoA + NAD(+) = a 3-oxoacyl-CoA + NADH + H(+). It carries out the reaction a (3S)-3-hydroxyacyl-CoA = a (2E)-enoyl-CoA + H2O. The enzyme catalyses a 4-saturated-(3S)-3-hydroxyacyl-CoA = a (3E)-enoyl-CoA + H2O. It catalyses the reaction (3S)-3-hydroxybutanoyl-CoA = (3R)-3-hydroxybutanoyl-CoA. The catalysed reaction is a (3Z)-enoyl-CoA = a 4-saturated (2E)-enoyl-CoA. It carries out the reaction a (3E)-enoyl-CoA = a 4-saturated (2E)-enoyl-CoA. The protein operates within lipid metabolism; fatty acid beta-oxidation. Involved in the aerobic and anaerobic degradation of long-chain fatty acids via beta-oxidation cycle. Catalyzes the formation of 3-oxoacyl-CoA from enoyl-CoA via L-3-hydroxyacyl-CoA. It can also use D-3-hydroxyacyl-CoA and cis-3-enoyl-CoA as substrate. The chain is Fatty acid oxidation complex subunit alpha from Pseudomonas fluorescens (strain SBW25).